We begin with the raw amino-acid sequence, 84 residues long: Large ribosomal subunit protein bL31B (84 aa).

Belongs to the bacterial ribosomal protein bL31 family. Type B subfamily. Part of the 50S ribosomal subunit.

This Rhodococcus opacus (strain B4) protein is Large ribosomal subunit protein bL31B.